The primary structure comprises 776 residues: Kinesin-like protein KIN-8A (776 aa).

2 disordered regions span residues 1-31 (MPVS…RGGA) and 80-135 (VGEV…KSSH). The segment covering 7-26 (ASAAGGQPWSSAAPAPASAP) has biased composition (low complexity). Pro residues predominate over residues 123-132 (PPPPPAPPPK). One can recognise a Kinesin motor domain in the interval 205–534 (RIMVFVRLRP…LHWADRAKEI (330 aa)). Residue 297–304 (GATGAGKT) participates in ATP binding. Positions 554-592 (TDQAKLVLELQKENSELRQQLARQQQKLLTVQAQTLASN) form a coiled coil. Residues 590-611 (ASNASPQQSPAPSAQISTPCST) form a disordered region. Low complexity predominate over residues 593–604 (ASPQQSPAPSAQ). Residues 634–671 (AAENAQVRDLQRKVKAMEAEIEKMKKEHLLQLKQKDEF) are a coiled coil.

It belongs to the TRAFAC class myosin-kinesin ATPase superfamily. Kinesin family. KIN-8 subfamily.

The sequence is that of Kinesin-like protein KIN-8A from Oryza sativa subsp. japonica (Rice).